Here is a 269-residue protein sequence, read N- to C-terminus: Expansin-A32 (269 aa).

An N-terminal signal peptide occupies residues 1 to 25 (MWCTWALGRVVLAVVFLVALAAGDA). The Expansin-like EG45 domain occupies 60-174 (DGACGYKDTS…RRVPCVKVGG (115 aa)). Residues 184 to 264 (YFNLVMVSNV…DWQFGVTYQA (81 aa)) enclose the Expansin-like CBD domain.

Belongs to the expansin family. Expansin A subfamily.

It localises to the secreted. The protein localises to the cell wall. Its subcellular location is the membrane. Its function is as follows. May cause loosening and extension of plant cell walls by disrupting non-covalent bonding between cellulose microfibrils and matrix glucans. No enzymatic activity has been found. May be required for rapid internodal elongation in deepwater rice during submergence. This chain is Expansin-A32 (EXPA32), found in Oryza sativa subsp. japonica (Rice).